Consider the following 349-residue polypeptide: Glycerol-3-phosphate dehydrogenase [NAD(+)], cytoplasmic (349 aa).

NAD(+) is bound by residues Gly10–Gly15, Phe41, and Phe97. Lys120 contributes to the substrate binding site. Residue Ala153 participates in NAD(+) binding. Ser154 carries the post-translational modification Phosphoserine. The Proton acceptor role is filled by Lys204. Residue Arg269 coordinates NAD(+). Arg269 to Asn270 is a binding site for substrate. Lys289 carries the post-translational modification N6-succinyllysine. Positions 296 and 298 each coordinate NAD(+). A Phosphotyrosine modification is found at Tyr326.

This sequence belongs to the NAD-dependent glycerol-3-phosphate dehydrogenase family. Homodimer. In terms of tissue distribution, expressed in liver (at protein level).

It is found in the cytoplasm. The catalysed reaction is sn-glycerol 3-phosphate + NAD(+) = dihydroxyacetone phosphate + NADH + H(+). With respect to regulation, inhibited by zinc ions and sulfate. Has glycerol-3-phosphate dehydrogenase activity. The sequence is that of Glycerol-3-phosphate dehydrogenase [NAD(+)], cytoplasmic from Homo sapiens (Human).